A 231-amino-acid polypeptide reads, in one-letter code: Sugar fermentation stimulation protein homolog (231 aa).

It belongs to the SfsA family.

The polypeptide is Sugar fermentation stimulation protein homolog (Citrifermentans bemidjiense (strain ATCC BAA-1014 / DSM 16622 / JCM 12645 / Bem) (Geobacter bemidjiensis)).